A 95-amino-acid polypeptide reads, in one-letter code: Small ribosomal subunit protein uS17 (95 aa).

The protein belongs to the universal ribosomal protein uS17 family. As to quaternary structure, part of the 30S ribosomal subunit.

One of the primary rRNA binding proteins, it binds specifically to the 5'-end of 16S ribosomal RNA. This chain is Small ribosomal subunit protein uS17, found in Phytoplasma australiense.